Reading from the N-terminus, the 591-residue chain is 2-succinyl-5-enolpyruvyl-6-hydroxy-3-cyclohexene-1-carboxylate synthase (591 aa).

Belongs to the TPP enzyme family. MenD subfamily. As to quaternary structure, homodimer. The cofactor is Mg(2+). Mn(2+) is required as a cofactor. Requires thiamine diphosphate as cofactor.

It carries out the reaction isochorismate + 2-oxoglutarate + H(+) = 5-enolpyruvoyl-6-hydroxy-2-succinyl-cyclohex-3-ene-1-carboxylate + CO2. Its pathway is quinol/quinone metabolism; 1,4-dihydroxy-2-naphthoate biosynthesis; 1,4-dihydroxy-2-naphthoate from chorismate: step 2/7. It participates in cofactor biosynthesis; phylloquinone biosynthesis. Functionally, catalyzes the thiamine diphosphate-dependent decarboxylation of 2-oxoglutarate and the subsequent addition of the resulting succinic semialdehyde-thiamine pyrophosphate anion to isochorismate to yield 2-succinyl-5-enolpyruvyl-6-hydroxy-3-cyclohexene-1-carboxylate (SEPHCHC). In Rippkaea orientalis (strain PCC 8801 / RF-1) (Cyanothece sp. (strain PCC 8801)), this protein is 2-succinyl-5-enolpyruvyl-6-hydroxy-3-cyclohexene-1-carboxylate synthase.